A 223-amino-acid polypeptide reads, in one-letter code: Ribosomal RNA small subunit methyltransferase G (223 aa).

Residues Gly-90, Leu-95, 141–142, and Arg-156 contribute to the S-adenosyl-L-methionine site; that span reads VE.

Belongs to the methyltransferase superfamily. RNA methyltransferase RsmG family.

Its subcellular location is the cytoplasm. The catalysed reaction is guanosine(527) in 16S rRNA + S-adenosyl-L-methionine = N(7)-methylguanosine(527) in 16S rRNA + S-adenosyl-L-homocysteine. Its function is as follows. Specifically methylates the N7 position of guanine in position 527 of 16S rRNA. The sequence is that of Ribosomal RNA small subunit methyltransferase G from Ralstonia nicotianae (strain ATCC BAA-1114 / GMI1000) (Ralstonia solanacearum).